Consider the following 279-residue polypeptide: Large ribosomal subunit protein uL2 (279 aa).

Disordered regions lie at residues 29 to 49 (PVKQ…NGRV) and 202 to 279 (NASI…KKKG). Over residues 36 to 49 (GKSSSGGRNNNGRV) the composition is skewed to low complexity. Residues 209 to 220 (GRSRWLGRRPHN) show a composition bias toward basic residues.

It belongs to the universal ribosomal protein uL2 family. Part of the 50S ribosomal subunit. Forms a bridge to the 30S subunit in the 70S ribosome.

Functionally, one of the primary rRNA binding proteins. Required for association of the 30S and 50S subunits to form the 70S ribosome, for tRNA binding and peptide bond formation. It has been suggested to have peptidyltransferase activity; this is somewhat controversial. Makes several contacts with the 16S rRNA in the 70S ribosome. This chain is Large ribosomal subunit protein uL2, found in Beijerinckia indica subsp. indica (strain ATCC 9039 / DSM 1715 / NCIMB 8712).